The following is a 215-amino-acid chain: Orotidine 5'-phosphate decarboxylase (215 aa).

Substrate contacts are provided by residues Asp12, Lys34, Asp60–Thr69, Ser117, Pro170–Ala180, Gly193, and Arg194. Catalysis depends on Lys62, which acts as the Proton donor.

This sequence belongs to the OMP decarboxylase family. Type 1 subfamily. In terms of assembly, homodimer.

The catalysed reaction is orotidine 5'-phosphate + H(+) = UMP + CO2. It participates in pyrimidine metabolism; UMP biosynthesis via de novo pathway; UMP from orotate: step 2/2. Functionally, catalyzes the decarboxylation of orotidine 5'-monophosphate (OMP) to uridine 5'-monophosphate (UMP). This is Orotidine 5'-phosphate decarboxylase from Methanococcoides burtonii (strain DSM 6242 / NBRC 107633 / OCM 468 / ACE-M).